The primary structure comprises 113 residues: Putative pterin-4-alpha-carbinolamine dehydratase (113 aa).

Belongs to the pterin-4-alpha-carbinolamine dehydratase family.

It catalyses the reaction (4aS,6R)-4a-hydroxy-L-erythro-5,6,7,8-tetrahydrobiopterin = (6R)-L-erythro-6,7-dihydrobiopterin + H2O. This Legionella pneumophila (strain Lens) protein is Putative pterin-4-alpha-carbinolamine dehydratase.